The sequence spans 234 residues: Small ribosomal subunit protein eS4 (234 aa).

An S4 RNA-binding domain is found at 37–99 (VPLLIVLRDV…REEYYRVFPG (63 aa)).

The protein belongs to the eukaryotic ribosomal protein eS4 family.

In Haloarcula marismortui (strain ATCC 43049 / DSM 3752 / JCM 8966 / VKM B-1809) (Halobacterium marismortui), this protein is Small ribosomal subunit protein eS4 (rps4e).